The following is a 167-amino-acid chain: Gem-associated protein 6 (167 aa).

In terms of domain architecture, Sm spans Lys-7–Gly-74. An AD domain is found at Glu-69–Gln-167. A phosphoserine mark is found at Ser-95 and Ser-166.

Part of the core SMN complex that contains SMN1, GEMIN2/SIP1, DDX20/GEMIN3, GEMIN4, GEMIN5, GEMIN6, GEMIN7, GEMIN8 and STRAP/UNRIP. Part of the SMN-Sm complex that contains SMN1, GEMIN2/SIP1, DDX20/GEMIN3, GEMIN4, GEMIN5, GEMIN6, GEMIN7, GEMIN8, STRAP/UNRIP and the Sm proteins SNRPB, SNRPD1, SNRPD2, SNRPD3, SNRPE, SNRPF and SNRPG. Interacts with GEMIN7; the interaction is direct. Interacts with GEMIN8; the interaction is direct. Interacts with SNRPB, SNRPD2, SNRPD3 and SNRPE; the interaction is direct.

It localises to the nucleus. The protein resides in the nucleoplasm. The protein localises to the gem. Its subcellular location is the cytoplasm. The SMN complex catalyzes the assembly of small nuclear ribonucleoproteins (snRNPs), the building blocks of the spliceosome, and thereby plays an important role in the splicing of cellular pre-mRNAs. Most spliceosomal snRNPs contain a common set of Sm proteins SNRPB, SNRPD1, SNRPD2, SNRPD3, SNRPE, SNRPF and SNRPG that assemble in a heptameric protein ring on the Sm site of the small nuclear RNA to form the core snRNP (Sm core). In the cytosol, the Sm proteins SNRPD1, SNRPD2, SNRPE, SNRPF and SNRPG are trapped in an inactive 6S pICln-Sm complex by the chaperone CLNS1A that controls the assembly of the core snRNP. To assemble core snRNPs, the SMN complex accepts the trapped 5Sm proteins from CLNS1A forming an intermediate. Binding of snRNA inside 5Sm triggers eviction of the SMN complex, thereby allowing binding of SNRPD3 and SNRPB to complete assembly of the core snRNP. The polypeptide is Gem-associated protein 6 (GEMIN6) (Homo sapiens (Human)).